The primary structure comprises 218 residues: Twisted gastrulation protein homolog 1-B (218 aa).

A signal peptide spans 1–25; that stretch reads MKPSFLHIPAAALLLCSLWILPIHC. Asn52, Asn81, and Asn147 each carry an N-linked (GlcNAc...) asparagine glycan.

It belongs to the twisted gastrulation protein family. Binds directly to bmp2, bmp4 and bmp7 and can form a ternary complex with bmps and chordin, thus preventing the binding of bmps to their cell surface receptors.

The protein localises to the secreted. Involved in dorsal-ventral patterning, permitting peak BMP signaling by antagonizing the residual anti-BMP activity of the cleavage products of chrd. Functions to promote the formation of ventral mesoderm by increasing the activity of bmp7 and other BMPS. Seems to antagonize BMP signaling by forming ternary complexes with chrd and BMPs, thereby preventing BMPs from binding to their receptors. In addition to the anti-BMP function, also has pro-BMP activity, partly mediated by cleavage and degradation of chrd, which releases BMPs from ternary complexes. May be an important modulator of BMP-regulated cartilage development and chondrocyte differentiation. The protein is Twisted gastrulation protein homolog 1-B (twsg1-b) of Xenopus laevis (African clawed frog).